The sequence spans 249 residues: tRNA (guanine-N(1)-)-methyltransferase (249 aa).

S-adenosyl-L-methionine-binding positions include G113 and 133 to 138 (IGDFVL).

It belongs to the RNA methyltransferase TrmD family. In terms of assembly, homodimer.

Its subcellular location is the cytoplasm. It catalyses the reaction guanosine(37) in tRNA + S-adenosyl-L-methionine = N(1)-methylguanosine(37) in tRNA + S-adenosyl-L-homocysteine + H(+). In terms of biological role, specifically methylates guanosine-37 in various tRNAs. This is tRNA (guanine-N(1)-)-methyltransferase from Aliivibrio fischeri (strain ATCC 700601 / ES114) (Vibrio fischeri).